We begin with the raw amino-acid sequence, 130 residues long: Ribonuclease P protein component (130 aa).

This sequence belongs to the RnpA family. In terms of assembly, consists of a catalytic RNA component (M1 or rnpB) and a protein subunit.

The catalysed reaction is Endonucleolytic cleavage of RNA, removing 5'-extranucleotides from tRNA precursor.. Functionally, RNaseP catalyzes the removal of the 5'-leader sequence from pre-tRNA to produce the mature 5'-terminus. It can also cleave other RNA substrates such as 4.5S RNA. The protein component plays an auxiliary but essential role in vivo by binding to the 5'-leader sequence and broadening the substrate specificity of the ribozyme. The chain is Ribonuclease P protein component from Desulfovibrio desulfuricans (strain ATCC 27774 / DSM 6949 / MB).